Consider the following 445-residue polypeptide: Phosphoglucosamine mutase (445 aa).

Ser99 serves as the catalytic Phosphoserine intermediate. Residues Ser99, Asp242, Asp244, and Asp246 each contribute to the Mg(2+) site. At Ser99 the chain carries Phosphoserine.

This sequence belongs to the phosphohexose mutase family. The cofactor is Mg(2+). In terms of processing, activated by phosphorylation.

The catalysed reaction is alpha-D-glucosamine 1-phosphate = D-glucosamine 6-phosphate. In terms of biological role, catalyzes the conversion of glucosamine-6-phosphate to glucosamine-1-phosphate. This chain is Phosphoglucosamine mutase, found in Nitratiruptor sp. (strain SB155-2).